A 478-amino-acid polypeptide reads, in one-letter code: POU domain, class 2, transcription factor 2 (478 aa).

Disordered stretches follow at residues 1 to 82 (MVHS…PPQA), 167 to 199 (QAVT…EASD), 275 to 298 (SSLP…GRRR), 357 to 391 (PCSA…PLSQ), and 409 to 478 (TLHP…PYQP). Residues 12–37 (RMSKPLEAEKQGLDSPSEHTDTERNG) show a composition bias toward basic and acidic residues. A compositionally biased stretch (polar residues) spans 38–60 (PDTNHQNPQNKTSPFSVSPTGPS). Residues 195–269 (EEASDLEELE…LLEKWLNDAE (75 aa)) enclose the POU-specific domain. A compositionally biased stretch (polar residues) spans 275–285 (SSLPSPNQLSR). Residues 297–356 (RRKKRTSIETNVRFALEKSFLANQKPTSEEILLIAEQLHMEKEVIRVWFCNRRQKEKRIN) constitute a DNA-binding region (homeobox). The interval 389 to 410 (LSQASSSLSTTVTTLSSAVGTL) is leucine-zipper. Gly residues predominate over residues 416–425 (AGGGAAGGGA).

The protein belongs to the POU transcription factor family. Class-2 subfamily. As to quaternary structure, interacts with NR3C1, AR and PGR. Interacts with POU2AF1; the interaction increases POU2F2 transactivation activity. Predominantly expressed in B-cells.

The protein resides in the nucleus. With respect to regulation, transactivation activity is enhanced by transcriptional coactivator POU2AF1. Functionally, transcription factor that specifically binds to the octamer motif (5'-ATTTGCAT-3'). Regulates IL6 expression in B cells with POU2AF1. Regulates transcription in a number of tissues in addition to activating immunoglobulin gene expression. Modulates transcription transactivation by NR3C1, AR and PGR. This Sus scrofa (Pig) protein is POU domain, class 2, transcription factor 2 (POU2F2).